A 340-amino-acid polypeptide reads, in one-letter code: MGEMEQLRQEAEQLKKQIADARKACADTTLAELVSGLEVVGRVQMRTRRTLRGHLAKIYAMHWATDSKLLVSASQDGKLIVWDTYTTNKVHAIPLRSSWVMTCAYAPSGNFVACGGLDNMCSIYSLKSREGNVKVSRELSAHTGYLSCCRFLDDNNIVTSSGDTTCALWDIETGQQKTVFVGHTGDCMSLAVSPDFKLFISGACDASAKLWDVREGTCRQTFTGHESDINAICFFPNGEAICTGSDDASCRLFDLRADQELTAYSDESIICGITSVAFSLSGRLLFAGYDDFNCNIWDSMKGERVGILSGHDNRVSCLGVTADGMAVATGSWDSFLKVWN.

7 WD repeats span residues 53–83 (GHLA…IVWD), 95–125 (LRSS…SIYS), 141–170 (AHTG…ALWD), 182–212 (GHTG…KLWD), 224–254 (GHES…RLFD), 268–298 (SIIC…NIWD), and 310–340 (GHDN…KVWN).

Belongs to the WD repeat G protein beta family. As to quaternary structure, g proteins are composed of 3 units, alpha, beta and gamma. Interacts with RASD2.

Its subcellular location is the cytoplasm. The protein localises to the perinuclear region. Functionally, guanine nucleotide-binding proteins (G proteins) are involved as a modulator or transducer in various transmembrane signaling systems. The beta and gamma chains are required for the GTPase activity, for replacement of GDP by GTP, and for G protein-effector interaction. This chain is Guanine nucleotide-binding protein G(I)/G(S)/G(T) subunit beta-3 (GNB3), found in Canis lupus familiaris (Dog).